Reading from the N-terminus, the 65-residue chain is Small ribosomal subunit protein bS21 (65 aa).

This sequence belongs to the bacterial ribosomal protein bS21 family.

The sequence is that of Small ribosomal subunit protein bS21 from Thermodesulfovibrio yellowstonii (strain ATCC 51303 / DSM 11347 / YP87).